The following is a 142-amino-acid chain: MKIHIIARGRIGRSPEGELVERYMKRLSWPYRITELPDRASNAPLPPAPPHSITVAMDEKGKTWRSMEFAQKIGNWQDEGRSEIRFLIGAADGLREEERAAADMYFAFGAATWPHMLARAMLAEQLWRASAILSGHPYHREG.

Position 89 (Gly-89) interacts with S-adenosyl-L-methionine.

Belongs to the RNA methyltransferase RlmH family. Homodimer.

The protein localises to the cytoplasm. The catalysed reaction is pseudouridine(1915) in 23S rRNA + S-adenosyl-L-methionine = N(3)-methylpseudouridine(1915) in 23S rRNA + S-adenosyl-L-homocysteine + H(+). Functionally, specifically methylates the pseudouridine at position 1915 (m3Psi1915) in 23S rRNA. This is Ribosomal RNA large subunit methyltransferase H from Zymomonas mobilis subsp. mobilis (strain ATCC 31821 / ZM4 / CP4).